The primary structure comprises 481 residues: Wax ester synthase/diacylglycerol acyltransferase 1 (481 aa).

Topologically, residues 1–185 (MKAEKVMERE…TTATKKPADS (185 aa)) are cytoplasmic. The Proton acceptor role is filled by H147. The helical transmembrane segment at 186–206 (MAWWLFVGFWFMIRVTFTTIV) threads the bilayer. Residues 207–481 (EFSKLMLTVC…QGEIFHKTEV (275 aa)) lie on the Lumenal side of the membrane.

It in the N-terminal section; belongs to the long-chain O-acyltransferase family. As to expression, expressed in flowers, siliques, top parts of stems, and leaves. Not found in roots, seeds and young seedlings.

The protein resides in the cell membrane. The protein localises to the endoplasmic reticulum membrane. It catalyses the reaction a long chain fatty alcohol + a fatty acyl-CoA = a wax ester + CoA. It carries out the reaction an acyl-CoA + a 1,2-diacyl-sn-glycerol = a triacyl-sn-glycerol + CoA. Its pathway is glycerolipid metabolism; triacylglycerol biosynthesis. It functions in the pathway lipid metabolism. In terms of biological role, bifunctional wax ester synthase/diacylglycerol acyltransferase. Involved in cuticular wax biosynthesis. Required to reduce leaf water loss, especially during drought. In Arabidopsis thaliana (Mouse-ear cress), this protein is Wax ester synthase/diacylglycerol acyltransferase 1.